The sequence spans 317 residues: uncharacterized protein (317 aa).

The next 6 helical transmembrane spans lie at Ile14 to Ser34, Leu72 to Val92, Leu119 to Ala139, Thr196 to Gln216, Leu230 to Leu250, and Ser291 to Tyr307. Solcar repeat units lie at residues Ser18 to Arg103, Leu113 to Lys217, and Leu224 to Met313.

The protein belongs to the mitochondrial carrier (TC 2.A.29) family.

It localises to the mitochondrion inner membrane. This is an uncharacterized protein from Schizosaccharomyces pombe (strain 972 / ATCC 24843) (Fission yeast).